We begin with the raw amino-acid sequence, 217 residues long: Probable cutinase 3 (217 aa).

A signal peptide spans 1 to 17 (MSLRSLFVAGLATLALA). Intrachain disulfides connect cysteine 39–cysteine 118 and cysteine 65–cysteine 79. The Nucleophile role is filled by serine 129. Cysteine 180 and cysteine 187 are joined by a disulfide. Aspartate 184 is an active-site residue. Histidine 197 (proton donor/acceptor) is an active-site residue.

It belongs to the cutinase family.

The protein localises to the secreted. The enzyme catalyses cutin + H2O = cutin monomers.. Catalyzes the hydrolysis of complex carboxylic polyesters found in the cell wall of plants. Degrades cutin, a macromolecule that forms the structure of the plant cuticle. The protein is Probable cutinase 3 of Neosartorya fischeri (strain ATCC 1020 / DSM 3700 / CBS 544.65 / FGSC A1164 / JCM 1740 / NRRL 181 / WB 181) (Aspergillus fischerianus).